The primary structure comprises 105 residues: Putative membrane protein insertion efficiency factor (105 aa).

Belongs to the UPF0161 family.

The protein localises to the cell membrane. In terms of biological role, could be involved in insertion of integral membrane proteins into the membrane. This is Putative membrane protein insertion efficiency factor from Bifidobacterium longum (strain NCC 2705).